The following is a 270-amino-acid chain: Gap junction beta-3 protein (270 aa).

Residues methionine 1–phenylalanine 20 lie on the Cytoplasmic side of the membrane. Residues glycine 21–alanine 40 form a helical membrane-spanning segment. The Extracellular segment spans residues glutamate 41–arginine 75. A helical membrane pass occupies residues leucine 76 to arginine 98. Over glutamate 99–glycine 126 the chain is Cytoplasmic. The helical transmembrane segment at leucine 127 to leucine 149 threads the bilayer. The Extracellular segment spans residues histidine 150–phenylalanine 187. A helical membrane pass occupies residues threonine 188–isoleucine 210. Residues cysteine 211–isoleucine 270 are Cytoplasmic-facing. Positions glutamate 250–isoleucine 270 are disordered. The span at asparagine 258–isoleucine 270 shows a compositional bias: polar residues.

It belongs to the connexin family. Beta-type (group I) subfamily. A connexon is composed of a hexamer of connexins. Interacts with CNST.

It localises to the cell membrane. The protein resides in the cell junction. It is found in the gap junction. Functionally, one gap junction consists of a cluster of closely packed pairs of transmembrane channels, the connexons, through which materials of low MW diffuse from one cell to a neighboring cell. The chain is Gap junction beta-3 protein (GJB3) from Homo sapiens (Human).